A 363-amino-acid polypeptide reads, in one-letter code: Histidine biosynthesis bifunctional protein HisB (363 aa).

The segment at 1 to 174 is histidinol-phosphatase; the sequence is MTQPTLFIDR…AVTNIGDRQP (174 aa). The active-site Nucleophile is Asp9. Mg(2+) is bound by residues Asp9 and Asp11. Asp11 functions as the Proton donor in the catalytic mechanism. Residues Cys92, His94, Cys100, and Cys102 each coordinate Zn(2+). Asp129 is a binding site for Mg(2+). The interval 175-363 is imidazoleglycerol-phosphate dehydratase; the sequence is RYAEVVRKTK…NELPSSKGVL (189 aa).

It in the N-terminal section; belongs to the histidinol-phosphatase family. This sequence in the C-terminal section; belongs to the imidazoleglycerol-phosphate dehydratase family. Mg(2+) is required as a cofactor. The cofactor is Zn(2+).

The protein localises to the cytoplasm. It carries out the reaction D-erythro-1-(imidazol-4-yl)glycerol 3-phosphate = 3-(imidazol-4-yl)-2-oxopropyl phosphate + H2O. It catalyses the reaction L-histidinol phosphate + H2O = L-histidinol + phosphate. It participates in amino-acid biosynthesis; L-histidine biosynthesis; L-histidine from 5-phospho-alpha-D-ribose 1-diphosphate: step 6/9. It functions in the pathway amino-acid biosynthesis; L-histidine biosynthesis; L-histidine from 5-phospho-alpha-D-ribose 1-diphosphate: step 8/9. The chain is Histidine biosynthesis bifunctional protein HisB from Actinobacillus pleuropneumoniae serotype 5b (strain L20).